The sequence spans 258 residues: Thiazole synthase (258 aa).

The active-site Schiff-base intermediate with DXP is the lysine 97. 1-deoxy-D-xylulose 5-phosphate-binding positions include glycine 158, 184–185 (AG), and 206–207 (NT).

This sequence belongs to the ThiG family. In terms of assembly, homotetramer. Forms heterodimers with either ThiH or ThiS.

Its subcellular location is the cytoplasm. It carries out the reaction [ThiS sulfur-carrier protein]-C-terminal-Gly-aminoethanethioate + 2-iminoacetate + 1-deoxy-D-xylulose 5-phosphate = [ThiS sulfur-carrier protein]-C-terminal Gly-Gly + 2-[(2R,5Z)-2-carboxy-4-methylthiazol-5(2H)-ylidene]ethyl phosphate + 2 H2O + H(+). It functions in the pathway cofactor biosynthesis; thiamine diphosphate biosynthesis. Functionally, catalyzes the rearrangement of 1-deoxy-D-xylulose 5-phosphate (DXP) to produce the thiazole phosphate moiety of thiamine. Sulfur is provided by the thiocarboxylate moiety of the carrier protein ThiS. In vitro, sulfur can be provided by H(2)S. The polypeptide is Thiazole synthase (Marinomonas sp. (strain MWYL1)).